The primary structure comprises 492 residues: N-succinylglutamate 5-semialdehyde dehydrogenase (492 aa).

Residue 220 to 225 coordinates NAD(+); the sequence is GSANTG. Catalysis depends on residues E243 and C277.

Belongs to the aldehyde dehydrogenase family. AstD subfamily.

It catalyses the reaction N-succinyl-L-glutamate 5-semialdehyde + NAD(+) + H2O = N-succinyl-L-glutamate + NADH + 2 H(+). Its pathway is amino-acid degradation; L-arginine degradation via AST pathway; L-glutamate and succinate from L-arginine: step 4/5. Its function is as follows. Catalyzes the NAD-dependent reduction of succinylglutamate semialdehyde into succinylglutamate. The protein is N-succinylglutamate 5-semialdehyde dehydrogenase of Escherichia coli O81 (strain ED1a).